Reading from the N-terminus, the 78-residue chain is Antitoxin FitA (78 aa).

Homodimer in the absence of FitB; forms a heterodimer with FitB; 4 FitAB heterodimers form a complex that binds to fitAB promoter DNA. The complex is also seen in solution.

Antitoxin component of a type II toxin-antitoxin (TA) system. Plays a role in the speed with which bacteria traverse human epithelial cells; disruption of the locus increases the speed of trafficking about 2-4-fold. Binds to its own promoter, binding affinity of the FitAB complex is 20-30-fold higher than FitA alone. No nuclease activity was observed for the FitAB complex, perhaps because FitA (the antitoxin) prevents metal binding and thus catalysis by FitB. In Neisseria gonorrhoeae (strain ATCC 700825 / FA 1090), this protein is Antitoxin FitA (fitA).